Consider the following 157-residue polypeptide: V-type proton ATPase 16 kDa proteolipid subunit c (157 aa).

Residues 1 to 10 (MALPEENPVY) are Lumenal-facing. Residues 11–33 (GPFFGVMGAAAAIIFSALGAAYG) form a helical membrane-spanning segment. Over 34–55 (TAKSGTGIAAMSVMRPELIMKS) the chain is Cytoplasmic. The helical transmembrane segment at 56 to 76 (IIPVVMAGIIAIYGLVVAVLI) threads the bilayer. Residues 77–94 (AGSLDTPTKYSLYKGFIH) are Lumenal-facing. A helical transmembrane segment spans residues 95-116 (LGAGLAVGFSGLAAGFAIGIVG). At 117 to 128 (DAGVRGTAQQPR) the chain is on the cytoplasmic side. Residues 129 to 154 (LFVGMILILIFAEVLGLYGLIVAIYL) traverse the membrane as a helical segment. Residues 155-157 (YTK) lie on the Lumenal side of the membrane.

This sequence belongs to the V-ATPase proteolipid subunit family. In terms of assembly, V-ATPase is a heteromultimeric enzyme made up of two complexes: the ATP-hydrolytic V1 complex and the proton translocation V0 complex. The V1 complex consists of three catalytic AB heterodimers that form a heterohexamer, three peripheral stalks each consisting of EG heterodimers, one central rotor including subunits D and F, and the regulatory subunits C and H. The proton translocation complex V0 consists of the proton transport subunit a, a ring of proteolipid subunits c9c'', rotary subunit d, subunits e and f, and the accessory subunits VhaAC45 and ATP6AP2.

The protein localises to the membrane. Its function is as follows. Proton-conducting pore forming subunit of the V0 complex of vacuolar(H+)-ATPase (V-ATPase), a multisubunit enzyme composed of a peripheral complex (V1) that hydrolyzes ATP and a membrane integral complex (V0) that translocates protons. V-ATPase is responsible for acidifying and maintaining the pH of intracellular compartments and in some cell types, is targeted to the plasma membrane, where it is responsible for acidifying the extracellular environment. This chain is V-type proton ATPase 16 kDa proteolipid subunit c, found in Aedes aegypti (Yellowfever mosquito).